Here is a 526-residue protein sequence, read N- to C-terminus: Methane monooxygenase component A alpha chain (526 aa).

Fe cation is bound by residues E114, E144, and H147. C151 is an active-site residue. Residues E209, E243, and H246 each contribute to the Fe cation site.

This sequence belongs to the TmoA/XamoA family. M.trichosporium has two forms of methane monooxygenase, a soluble and a membrane-bound type. The soluble type consists of four components (A to D): protein A, comprising three chains, in an alpha-2, beta-2, gamma-2 configuration, is a nonheme iron protein containing an unusual mu-hydroxo bridge structure at its active site and interacts with both oxygen and methane. Fe cation is required as a cofactor.

It catalyses the reaction methane + NADH + O2 + H(+) = methanol + NAD(+) + H2O. It carries out the reaction methane + NADPH + O2 + H(+) = methanol + NADP(+) + H2O. Its function is as follows. Responsible for the initial oxygenation of methane to methanol in methanotrophs. It also catalyzes the monohydroxylation of a variety of unactivated alkenes, alicyclic, aromatic and heterocyclic compounds. The chain is Methane monooxygenase component A alpha chain (mmoX) from Methylosinus trichosporium.